Consider the following 117-residue polypeptide: Large ribosomal subunit protein uL24 (117 aa).

Belongs to the universal ribosomal protein uL24 family. Part of the 50S ribosomal subunit.

Its function is as follows. One of two assembly initiator proteins, it binds directly to the 5'-end of the 23S rRNA, where it nucleates assembly of the 50S subunit. In terms of biological role, one of the proteins that surrounds the polypeptide exit tunnel on the outside of the subunit. This is Large ribosomal subunit protein uL24 from Thermosynechococcus vestitus (strain NIES-2133 / IAM M-273 / BP-1).